The following is a 204-amino-acid chain: Large ribosomal subunit protein eL15 (204 aa).

The protein belongs to the eukaryotic ribosomal protein eL15 family. As to quaternary structure, component of the large ribosomal subunit.

Its subcellular location is the cytoplasm. Functionally, component of the large ribosomal subunit. The ribosome is a large ribonucleoprotein complex responsible for the synthesis of proteins in the cell. In Carassius auratus (Goldfish), this protein is Large ribosomal subunit protein eL15 (rpl15).